We begin with the raw amino-acid sequence, 433 residues long: 23S rRNA (uracil(1939)-C(5))-methyltransferase RlmD (433 aa).

One can recognise a TRAM domain in the interval 10–68; it reads RTTTRQIITVSVNDLDSFGQGVARHNGKTLFIPGLLPQENAEVTVTEDKKQYARAKVVR. Positions 81, 87, 90, and 162 each coordinate [4Fe-4S] cluster. S-adenosyl-L-methionine contacts are provided by Gln-265, Phe-294, Asn-299, Glu-315, Asn-342, and Asp-363. Cys-389 serves as the catalytic Nucleophile.

This sequence belongs to the class I-like SAM-binding methyltransferase superfamily. RNA M5U methyltransferase family. RlmD subfamily.

It catalyses the reaction uridine(1939) in 23S rRNA + S-adenosyl-L-methionine = 5-methyluridine(1939) in 23S rRNA + S-adenosyl-L-homocysteine + H(+). Functionally, catalyzes the formation of 5-methyl-uridine at position 1939 (m5U1939) in 23S rRNA. This is 23S rRNA (uracil(1939)-C(5))-methyltransferase RlmD from Shigella sonnei (strain Ss046).